Consider the following 1548-residue polypeptide: UDP-glucose:glycoprotein glucosyltransferase (1548 aa).

The N-terminal stretch at 1–22 (MLRAVALCVSVVLIALYTPTSG) is a signal peptide. Asn181 carries an N-linked (GlcNAc...) asparagine glycan. Residues 243 to 253 (TEYKSQDDAPK) are compositionally biased toward basic and acidic residues. A disordered region spans residues 243-265 (TEYKSQDDAPKPEAGSTSDEDLA). N-linked (GlcNAc...) asparagine glycosylation is found at Asn266 and Asn864. A glucosyltransferase region spans residues 1227-1548 (SANQAATDED…PSHEPKHGEL (322 aa)). A compositionally biased stretch (basic and acidic residues) spans 1512 to 1523 (EDHENSHSRDSA). The tract at residues 1512–1548 (EDHENSHSRDSAVDDSVDDSVEVTTVTPSHEPKHGEL) is disordered. A Prevents secretion from ER motif is present at residues 1545–1548 (HGEL).

It belongs to the glycosyltransferase 8 family. Monomer. May interact with CG7484/Sep15. The cofactor is Ca(2+). Mn(2+) serves as cofactor.

It localises to the endoplasmic reticulum lumen. Its subcellular location is the endoplasmic reticulum-Golgi intermediate compartment. The enzyme catalyses N(4)-(alpha-D-Man-(1-&gt;2)-alpha-D-Man-(1-&gt;2)-alpha-D-Man-(1-&gt;3)-[alpha-D-Man-(1-&gt;2)-alpha-D-Man-(1-&gt;3)-[alpha-D-Man-(1-&gt;2)-alpha-D-Man-(1-&gt;6)]-alpha-D-Man-(1-&gt;6)]-beta-D-Man-(1-&gt;4)-beta-D-GlcNAc-(1-&gt;4)-beta-D-GlcNAc)-L-asparaginyl-[protein] (N-glucan mannose isomer 9A1,2,3B1,2,3) + UDP-alpha-D-glucose = N(4)-(alpha-D-Glc-(1-&gt;3)-alpha-D-Man-(1-&gt;2)-alpha-D-Man-(1-&gt;2)-alpha-D-Man-(1-&gt;3)-[alpha-D-Man-(1-&gt;2)-alpha-D-Man-(1-&gt;3)-[alpha-D-Man-(1-&gt;2)-alpha-D-Man-(1-&gt;6)]-alpha-D-Man-(1-&gt;6)]-beta-D-Man-(1-&gt;4)-beta-D-GlcNAc-(1-&gt;4)-beta-D-GlcNAc)-L-asparaginyl-[protein] + UDP + H(+). It participates in protein modification; protein glycosylation. Functionally, recognizes glycoproteins with minor folding defects. Reglucosylates single N-glycans near the misfolded part of the protein, thus providing quality control for protein folding in the endoplasmic reticulum. Reglucosylated proteins are recognized by calreticulin for recycling to the endoplasmic reticulum and refolding or degradation. The chain is UDP-glucose:glycoprotein glucosyltransferase from Drosophila melanogaster (Fruit fly).